The following is a 235-amino-acid chain: Ribitol-5-phosphate cytidylyltransferase (235 aa).

CTP-binding positions include 7 to 10 (LAGG), 82 to 88 (GADRNTS), and Ser-113.

This sequence belongs to the IspD/TarI cytidylyltransferase family. TarI subfamily.

The catalysed reaction is D-ribitol 5-phosphate + CTP + H(+) = CDP-L-ribitol + diphosphate. It functions in the pathway cell wall biogenesis; poly(ribitol phosphate) teichoic acid biosynthesis. Its function is as follows. Catalyzes the transfer of the cytidylyl group of CTP to D-ribitol 5-phosphate. The protein is Ribitol-5-phosphate cytidylyltransferase of Streptococcus pneumoniae serotype 2 (strain D39 / NCTC 7466).